The sequence spans 411 residues: Imidazolonepropionase (411 aa).

2 residues coordinate Fe(3+): histidine 78 and histidine 80. Zn(2+)-binding residues include histidine 78 and histidine 80. Residues arginine 87, tyrosine 150, and histidine 183 each contribute to the 4-imidazolone-5-propanoate site. Position 150 (tyrosine 150) interacts with N-formimidoyl-L-glutamate. Histidine 248 provides a ligand contact to Fe(3+). Histidine 248 is a Zn(2+) binding site. Position 251 (glutamine 251) interacts with 4-imidazolone-5-propanoate. Aspartate 322 contacts Fe(3+). Aspartate 322 is a binding site for Zn(2+). Residues asparagine 324 and glycine 326 each contribute to the N-formimidoyl-L-glutamate site. Serine 327 serves as a coordination point for 4-imidazolone-5-propanoate.

The protein belongs to the metallo-dependent hydrolases superfamily. HutI family. Zn(2+) is required as a cofactor. Requires Fe(3+) as cofactor.

It is found in the cytoplasm. It carries out the reaction 4-imidazolone-5-propanoate + H2O = N-formimidoyl-L-glutamate. It functions in the pathway amino-acid degradation; L-histidine degradation into L-glutamate; N-formimidoyl-L-glutamate from L-histidine: step 3/3. Functionally, catalyzes the hydrolytic cleavage of the carbon-nitrogen bond in imidazolone-5-propanoate to yield N-formimidoyl-L-glutamate. It is the third step in the universal histidine degradation pathway. The sequence is that of Imidazolonepropionase from Christiangramia forsetii (strain DSM 17595 / CGMCC 1.15422 / KT0803) (Gramella forsetii).